A 675-amino-acid chain; its full sequence is Gastrula zinc finger protein xFG20-1 (675 aa).

10 consecutive C2H2-type zinc fingers follow at residues 62 to 84 (FTCT…IRAH), 90 to 112 (FSCM…YSVH), 118 to 140 (FSCT…LRVH), 146 to 168 (YSCE…QRTH), 174 to 196 (FSCT…LKTH), 202 to 224 (HLCA…QKIH), 257 to 279 (FPCT…QSTH), 286 to 308 (FPCT…QSTH), 344 to 366 (LPCT…QSTH), and 373 to 395 (LPCT…QSTH). A disordered region spans residues 302–325 (RTHQSTHTEGQKSLPSTESGGTFS). The segment covering 304–325 (HQSTHTEGQKSLPSTESGGTFS) has biased composition (polar residues). Polar residues predominate over residues 390–407 (THQSTHTSPSTEFGVQTT). The tract at residues 390–423 (THQSTHTSPSTEFGVQTTEDNHQSPSKDHTGEKP) is disordered. Residues 408 to 421 (EDNHQSPSKDHTGE) show a composition bias toward basic and acidic residues. 8 consecutive C2H2-type zinc fingers follow at residues 424 to 446 (FSCS…LVVH), 452 to 474 (YHCI…QRTH), 480 to 501 (FSCN…YRVH), 507 to 529 (YPCT…YKVH), 535 to 557 (YPCQ…LRTH), 563 to 585 (FSCT…LTTH), 591 to 613 (FSCT…YKMH), and 619 to 642 (FTCT…TTVH).

Belongs to the krueppel C2H2-type zinc-finger protein family.

The protein localises to the nucleus. Its function is as follows. May be involved in transcriptional regulation. The protein is Gastrula zinc finger protein xFG20-1 of Xenopus laevis (African clawed frog).